The sequence spans 86 residues: Small ribosomal subunit protein bS20 (86 aa).

A compositionally biased stretch (basic and acidic residues) spans 1–18; it reads MANIKSQEKRIRTNERAR. Residues 1-25 form a disordered region; that stretch reads MANIKSQEKRIRTNERARLRNQATK.

It belongs to the bacterial ribosomal protein bS20 family.

Its function is as follows. Binds directly to 16S ribosomal RNA. This is Small ribosomal subunit protein bS20 from Mycobacteroides abscessus (strain ATCC 19977 / DSM 44196 / CCUG 20993 / CIP 104536 / JCM 13569 / NCTC 13031 / TMC 1543 / L948) (Mycobacterium abscessus).